The chain runs to 100 residues: Large ribosomal subunit protein uL23 (100 aa).

Belongs to the universal ribosomal protein uL23 family. In terms of assembly, part of the 50S ribosomal subunit. Contacts protein L29, and trigger factor when it is bound to the ribosome.

Its function is as follows. One of the early assembly proteins it binds 23S rRNA. One of the proteins that surrounds the polypeptide exit tunnel on the outside of the ribosome. Forms the main docking site for trigger factor binding to the ribosome. The chain is Large ribosomal subunit protein uL23 from Pseudoalteromonas translucida (strain TAC 125).